The following is a 546-amino-acid chain: Chaperonin GroEL (546 aa).

Residues 30-33 (TLGP), Lys-51, 87-91 (DGTTT), Gly-415, and Asp-495 contribute to the ATP site.

It belongs to the chaperonin (HSP60) family. Forms a cylinder of 14 subunits composed of two heptameric rings stacked back-to-back. Interacts with the co-chaperonin GroES.

It is found in the cytoplasm. The catalysed reaction is ATP + H2O + a folded polypeptide = ADP + phosphate + an unfolded polypeptide.. In terms of biological role, together with its co-chaperonin GroES, plays an essential role in assisting protein folding. The GroEL-GroES system forms a nano-cage that allows encapsulation of the non-native substrate proteins and provides a physical environment optimized to promote and accelerate protein folding. This is Chaperonin GroEL from Alteromonas mediterranea (strain DSM 17117 / CIP 110805 / LMG 28347 / Deep ecotype).